Reading from the N-terminus, the 206-residue chain is Outer-membrane lipoprotein LolB (206 aa).

Residues 1 to 18 (MKTFKFFTALFATAILTA) form the signal peptide. A lipid anchor (N-palmitoyl cysteine) is attached at cysteine 19. Cysteine 19 carries S-diacylglycerol cysteine lipidation.

This sequence belongs to the LolB family. As to quaternary structure, monomer.

Its subcellular location is the cell outer membrane. Plays a critical role in the incorporation of lipoproteins in the outer membrane after they are released by the LolA protein. This Haemophilus influenzae (strain PittGG) protein is Outer-membrane lipoprotein LolB.